We begin with the raw amino-acid sequence, 1273 residues long: MTDITLPPGDGSIQRVEPVDIQQEMQRSYIDYAMSVIVGRALPEVRDGLKPVHRRVLYAMLDSGFRPDRSHAKSARSVAETMGNYHPHGDASIYDTLVRMAQPWSLRYPLVDGQGNFGSPGNDPPAAMRYCVSGNSLVRLLFGKSIRIGDIVTGAQFNSDNPIDLKVLDRHGNPVVADYLFHSGEHQTYTVRTTEGYEITGTSNHPLLCLVNVGGIPTLLWKLIGEIRSGDYVVLQRIPPVEFGPADWYSTMEALLFGAFISGGFVFQDHAGFNSLDRDYFTMVVNAYDTVVGGLRCISSRITVSGSTLLELDVYNLIEFKKTRLSGLCGQRSADKLVPDWLWHSPSTVKRAFLQALFEGEGFSSILSRNIIEISYSTLSERLAADVQQMLLEFGVVSERYCHTVNEYKVVIANRAQVEMFFTQVGFGVTKQAKLIRDVVSMSPCVGMDINCVPGLATFIRKHCDNRWVEEDSFNQHNVDCVQHWHHHSAEIVGHIADPDIRAIVTDLTDGRFYYARVASVTDTGIQPVFSLHVDTEDHSFLTNGFISHNTEARLTPLAMEMLREIDEETVDFISNYDGRVQEPMVLPSRFPNLLANGSGGIAVGMATNIPPHNLYELADAVFWCLENHDADEETMLVAVMERVKGPDFPTAGLIVGSQGIADAYKTGRGSIRIRGVVEVEEDSRGRTSLVITELPYQVNHDNFITSIAEQVRTGRLAGISNVEDQGSDRVGVRIVIEIKRDAVAKVVLNNLYKHTQLQTSFGANMLSIVDGVPRTLRLDQMICYYVEHQLDVIVRRTTYRLRKANERAHILRGLVKALDALDEVITLIRASQTVDIARVGVVELLDIDDIQAQAILDMQLRRLAALERQRIIDDLAKIEVEIADLGDILAKPERRRGIIRNELTEIAEKYGDDRRTRIIAVDGDVNDEDLIAREEVVVTITETGYAKRTKTDLYRSQKRGGKGVQGAGLKQDDIVRHFFVCSTHDWILFFTTQGRVYRAKAYELPEASRTARGQHVANLLAFQPEERIAQVIQIRSYEDAPYLVLATRAGLVKKSKLTDFDSNRSGGIVAINLRDNDELVGAVLCAADGDLLLVSANGQSIRFSATDEALRPMGRATSGVQGMRFNADDRLLSLNVVREDTYLLVATSGGYAKRTSIEEYPMQGRGGKGVLTVMYDRRRGSLVGAIVVDEDSELYAITSGGGVIRTTARQVRQAGRQTKGVRLMNLGEGDTLLAIARNAEESADGVSVKVMISRSRVLSFFGSDSNTSPDRT.

The region spanning 42–931 (LPEVRDGLKP…VDGDVNDEDL (890 aa)) is the Topo IIA-type catalytic domain. Tyr-130 serves as the catalytic O-(5'-phospho-DNA)-tyrosine intermediate. Residues 256 to 396 (LFGAFISGGF…VQQMLLEFGV (141 aa)) enclose the DOD-type homing endonuclease domain. The short motif at 958-964 (QKRGGKG) is the GyrA-box element.

This sequence belongs to the type II topoisomerase GyrA/ParC subunit family. As to quaternary structure, heterotetramer, composed of two GyrA and two GyrB chains. In the heterotetramer, GyrA contains the active site tyrosine that forms a transient covalent intermediate with the DNA, while GyrB binds cofactors catalyzes ATP hydrolysis. Post-translationally, this protein undergoes a protein self splicing that involves a post-translational excision of the intervening region (intein) followed by peptide ligation.

It is found in the cytoplasm. The catalysed reaction is ATP-dependent breakage, passage and rejoining of double-stranded DNA.. With respect to regulation, DNA supercoiling is inhibited by fluoroquinolones; IC(50) 1 ug/ml for sitafloxacin. A type II topoisomerase that negatively supercoils closed circular double-stranded (ds) DNA in an ATP-dependent manner to modulate DNA topology and maintain chromosomes in an underwound state. Negative supercoiling favors strand separation, and DNA replication, transcription, recombination and repair, all of which involve strand separation. Also able to catalyze the interconversion of other topological isomers of dsDNA rings, including catenanes and knotted rings. Type II topoisomerases break and join 2 DNA strands simultaneously in an ATP-dependent manner. In Mycobacterium leprae (strain TN), this protein is DNA gyrase subunit A.